The chain runs to 338 residues: Solute carrier family 35 member G5 (338 aa).

The disordered stretch occupies residues 1-21 (MAGSHPYFNLPDSTHPSPPSA). 9 helical membrane-spanning segments follow: residues 37 to 57 (TNGL…VGPL), 67 to 87 (LPSL…ALPL), 105 to 125 (CFCA…VQVV), 160 to 180 (CGLL…LWTL), 190 to 210 (ALGY…LLVY), 221 to 241 (TVAF…LFVL), 250 to 270 (LLSW…FTCV), 281 to 301 (LVCA…YYVL), and 305 to 325 (VAPS…IITA). Positions 49-174 (LPAGFVGPLS…SILGLIIIVG (126 aa)) constitute an EamA 1 domain. In terms of domain architecture, EamA 2 spans 272-325 (YAVTKAHPALVCAVLHSEVVVALILQYYVLHETVAPSDIMGAGIVLGSIAIITA).

This sequence belongs to the SLC35G solute transporter family.

It is found in the membrane. This chain is Solute carrier family 35 member G5 (SLC35G5), found in Pan troglodytes (Chimpanzee).